Here is a 1067-residue protein sequence, read N- to C-terminus: FHIP family protein GL19323 (1067 aa).

Positions 1–11 (MSWLRSSPLRQ) are enriched in polar residues. Disordered stretches follow at residues 1 to 31 (MSWL…GSLR), 503 to 525 (LARP…QPIQ), and 832 to 1013 (NENS…SEPA). Residues Ser508 and Ser835 each carry the phosphoserine modification. The segment covering 842-858 (QPQTTLSQQQQQQQGQQ) has biased composition (low complexity). Over residues 859-878 (RSAYATLSAATPVQATQTSA) the composition is skewed to polar residues. The segment covering 893–904 (SKSISSMFSRRS) has biased composition (low complexity). Residues 918–949 (LVGNNNSGSGQSQPFSSTGTGTCETSLSTNPQ) are compositionally biased toward polar residues. Residues 950–979 (SGAAAARSTGTATTANGNSSNSNISIGGST) show a composition bias toward low complexity. Polar residues predominate over residues 980-996 (QTLSGHSNTTTYSSSTL).

Belongs to the FHIP family.

The sequence is that of FHIP family protein GL19323 from Drosophila persimilis (Fruit fly).